Reading from the N-terminus, the 228-residue chain is Prophenin-2 (228 aa).

An N-terminal signal peptide occupies residues 1 to 29 (METQRASLCLGRWSLWLLLLALVVPSASA). Positions 30 to 146 (QALSYREAVL…FLRRPRLRRQ (117 aa)) are excised as a propeptide. 2 disulfide bridges follow: Cys-85–Cys-96 and Cys-107–Cys-124. Repeat copies occupy residues 148-157 (FPPPNVPGPR), 158-167 (FPPPNVPGPR), 168-177 (FPPPNFPGPR), 178-187 (FPPPNFPGPR), 188-197 (FPPPNFPGPP), 198-207 (FPPPIFPGPW), and 208-217 (FPPPPPFRPP). Positions 148 to 217 (FPPPNVPGPR…FPPPPPFRPP (70 aa)) are 7 X 10 AA tandem repeats. Disordered stretches follow at residues 167–195 (RFPP…NFPG) and 207–228 (WFPP…PGRR). The residue at position 225 (Pro-225) is a Proline amide. The propeptide at 226–228 (GRR) is removed in mature form.

The protein belongs to the cathelicidin family.

The protein resides in the secreted. Exerts antimicrobial activity. It is more effective against Gram-negative bacteria than Gram-positive bacteria. This chain is Prophenin-2, found in Sus scrofa (Pig).